Reading from the N-terminus, the 238-residue chain is Ribonuclease PH (238 aa).

A disordered region spans residues 64–86 (GMLPRSTGSRMDREAARGKQSGR). Residues Arg86 and 124–126 (GTR) contribute to the phosphate site.

It belongs to the RNase PH family. Homohexameric ring arranged as a trimer of dimers.

The catalysed reaction is tRNA(n+1) + phosphate = tRNA(n) + a ribonucleoside 5'-diphosphate. Phosphorolytic 3'-5' exoribonuclease that plays an important role in tRNA 3'-end maturation. Removes nucleotide residues following the 3'-CCA terminus of tRNAs; can also add nucleotides to the ends of RNA molecules by using nucleoside diphosphates as substrates, but this may not be physiologically important. Probably plays a role in initiation of 16S rRNA degradation (leading to ribosome degradation) during starvation. In Methylobacillus flagellatus (strain ATCC 51484 / DSM 6875 / VKM B-1610 / KT), this protein is Ribonuclease PH.